Consider the following 300-residue polypeptide: uncharacterized protein (300 aa).

The interval 230 to 251 (LRQSTSRQSISRQSISRQSTSR) is disordered. Residues 231–251 (RQSTSRQSISRQSISRQSTSR) show a composition bias toward low complexity.

This is an uncharacterized protein from Acanthamoeba polyphaga (Amoeba).